A 341-amino-acid chain; its full sequence is MLVLGLETSCDETGVALYDSERGLLADALFSQIDLHRAYGGVVPELASRDHVKRMLPLIRQTLAEADCVATDIDAIAYTAGPGLVGALLVGASCAQALAFAWDIPALGVHHMEGHLLAPMLEENPPQFPFVALLVSGGHTQLVRVDGIGQYELLGETLDDAAGEAFDKTAKMMGMQYPGGPEISKAAMQGVAGRFVFPRPMTDRPGLEFSFSGLKTSALNTWQQCRNAGDDSEQTRCDIALAFQQAVVETLTIKCKRALKQTGLKSLVIAGGVSANKALRASLESMLGDLRGHVYYARPEFCTDNGAMIAFAGCQRLQVGQKEDLSISVQARWPMEQLSGL.

Positions 111 and 115 each coordinate Fe cation. Residues 134-138 (LVSGG), Asp-167, Gly-180, and Asn-276 each bind substrate. Asp-304 lines the Fe cation pocket.

Belongs to the KAE1 / TsaD family. The cofactor is Fe(2+).

The protein localises to the cytoplasm. The enzyme catalyses L-threonylcarbamoyladenylate + adenosine(37) in tRNA = N(6)-L-threonylcarbamoyladenosine(37) in tRNA + AMP + H(+). Its function is as follows. Required for the formation of a threonylcarbamoyl group on adenosine at position 37 (t(6)A37) in tRNAs that read codons beginning with adenine. Is involved in the transfer of the threonylcarbamoyl moiety of threonylcarbamoyl-AMP (TC-AMP) to the N6 group of A37, together with TsaE and TsaB. TsaD likely plays a direct catalytic role in this reaction. The chain is tRNA N6-adenosine threonylcarbamoyltransferase from Pseudomonas syringae pv. syringae (strain B728a).